The primary structure comprises 178 residues: S-alkylcysteine N-acetyltransferase (178 aa).

The 160-residue stretch at 4-163 (DIFRLATVED…IGVMMHKVLI (160 aa)) folds into the N-acetyltransferase domain.

Belongs to the acetyltransferase family.

The catalysed reaction is an S-substituted L-cysteine + acetyl-CoA = an N-acetyl-L-cysteine-S-conjugate + CoA + H(+). It catalyses the reaction S-benzyl-L-cysteine + acetyl-CoA = N-acetyl-S-benzyl-L-cysteine + CoA + H(+). It carries out the reaction S-methyl-L-cysteine + acetyl-CoA = N-acetyl-S-methyl-L-cysteine + CoA + H(+). It participates in amino-acid metabolism. Functionally, involved in a cysteine salvage pathway from S-alkylcysteine. Catalyzes the first step in this pathway, i.e. the amine acetylation of an S-alkylcysteine with a preference for S-benzyl-L-cysteine over S-methyl-L-cysteine. This pathway is likely important in the catabolism of alkylated cysteine generated by proteolysis of alkylated glutathione formed in the detoxification of a wide range of electrophiles. The protein is S-alkylcysteine N-acetyltransferase of Bacillus subtilis (strain 168).